The following is a 163-amino-acid chain: RRM-domain-containing protein ECU01_0840 (163 aa).

One can recognise an RRM domain in the interval 84-163; that stretch reads CSVKLSNLPL…SLGLSAEIAR (80 aa).

In Encephalitozoon cuniculi (strain GB-M1) (Microsporidian parasite), this protein is RRM-domain-containing protein ECU01_0840.